Consider the following 368-residue polypeptide: 2-aminoethylphosphonate--pyruvate transaminase (368 aa).

Position 192 is an N6-(pyridoxal phosphate)lysine (lysine 192).

It belongs to the class-V pyridoxal-phosphate-dependent aminotransferase family. PhnW subfamily. In terms of assembly, homodimer. The cofactor is pyridoxal 5'-phosphate.

The enzyme catalyses (2-aminoethyl)phosphonate + pyruvate = phosphonoacetaldehyde + L-alanine. In terms of biological role, involved in phosphonate degradation. This is 2-aminoethylphosphonate--pyruvate transaminase from Pseudomonas putida (strain ATCC 700007 / DSM 6899 / JCM 31910 / BCRC 17059 / LMG 24140 / F1).